Reading from the N-terminus, the 511-residue chain is ATP synthase subunit alpha (511 aa).

Residue 169-176 coordinates ATP; it reads GDRQTGKT.

Belongs to the ATPase alpha/beta chains family. F-type ATPases have 2 components, CF(1) - the catalytic core - and CF(0) - the membrane proton channel. CF(1) has five subunits: alpha(3), beta(3), gamma(1), delta(1), epsilon(1). CF(0) has three main subunits: a(1), b(2) and c(9-12). The alpha and beta chains form an alternating ring which encloses part of the gamma chain. CF(1) is attached to CF(0) by a central stalk formed by the gamma and epsilon chains, while a peripheral stalk is formed by the delta and b chains.

Its subcellular location is the cell inner membrane. The catalysed reaction is ATP + H2O + 4 H(+)(in) = ADP + phosphate + 5 H(+)(out). Functionally, produces ATP from ADP in the presence of a proton gradient across the membrane. The alpha chain is a regulatory subunit. The sequence is that of ATP synthase subunit alpha from Paracoccus denitrificans (strain Pd 1222).